The following is a 106-amino-acid chain: Thioredoxin (106 aa).

Lysine 3 is subject to N6-acetyllysine. The Thioredoxin domain maps to 3–106 (KQIESKTAFQ…KLEATINELV (104 aa)). At lysine 8 the chain carries N6-succinyllysine. Catalysis depends on nucleophile residues cysteine 32 and cysteine 35. A disulfide bridge links cysteine 32 with cysteine 35. Lysine 39 is subject to N6-acetyllysine. S-nitrosocysteine occurs at positions 62 and 69. Residue cysteine 73 is modified to S-nitrosocysteine; alternate. Lysine 95 carries the post-translational modification N6-acetyllysine; alternate. Residue lysine 95 is modified to N6-succinyllysine; alternate.

Belongs to the thioredoxin family. As to quaternary structure, homodimer; disulfide-linked. Interacts with TXNIP through the redox-active site. Interacts with MAP3K5 and CASP3. Interacts with APEX1; the interaction stimulates the FOS/JUN AP-1 DNA-binding activity in a redox-dependent manner. In terms of processing, in the fully reduced protein, both Cys-69 and Cys-73 are nitrosylated in response to nitric oxide (NO). When two disulfide bonds are present in the protein, only Cys-73 is nitrosylated. Cys-73 can serve as donor for nitrosylation of target proteins.

It is found in the nucleus. It localises to the cytoplasm. Its subcellular location is the secreted. Participates in various redox reactions through the reversible oxidation of its active center dithiol to a disulfide and catalyzes dithiol-disulfide exchange reactions. Plays a role in the reversible S-nitrosylation of cysteine residues in target proteins, and thereby contributes to the response to intracellular nitric oxide. Nitrosylates the active site Cys of CASP3 in response to nitric oxide (NO), and thereby inhibits caspase-3 activity. Induces the FOS/JUN AP-1 DNA binding activity in ionizing radiation (IR) cells through its oxidation/reduction status and stimulates AP-1 transcriptional activity. The polypeptide is Thioredoxin (TXN) (Pongo abelii (Sumatran orangutan)).